The sequence spans 263 residues: Endonuclease 8 (263 aa).

Catalysis depends on Pro-2, which acts as the Schiff-base intermediate with DNA. The active-site Proton donor is the Glu-3. The active-site Proton donor; for beta-elimination activity is Lys-53. Gln-70, Arg-125, and Asn-169 together coordinate DNA. An FPG-type zinc finger spans residues 229-263 (KLFHRDGEACERCGGIIEKTTLSSRPFYWCPHCQK). Arg-253 acts as the Proton donor; for delta-elimination activity in catalysis.

Belongs to the FPG family. Zn(2+) is required as a cofactor.

The enzyme catalyses 2'-deoxyribonucleotide-(2'-deoxyribose 5'-phosphate)-2'-deoxyribonucleotide-DNA = a 3'-end 2'-deoxyribonucleotide-(2,3-dehydro-2,3-deoxyribose 5'-phosphate)-DNA + a 5'-end 5'-phospho-2'-deoxyribonucleoside-DNA + H(+). Involved in base excision repair of DNA damaged by oxidation or by mutagenic agents. Acts as a DNA glycosylase that recognizes and removes damaged bases. Has a preference for oxidized pyrimidines, such as thymine glycol, 5,6-dihydrouracil and 5,6-dihydrothymine. Has AP (apurinic/apyrimidinic) lyase activity and introduces nicks in the DNA strand. Cleaves the DNA backbone by beta-delta elimination to generate a single-strand break at the site of the removed base with both 3'- and 5'-phosphates. This chain is Endonuclease 8, found in Salmonella typhimurium (strain SL1344).